The following is a 194-amino-acid chain: GTP cyclohydrolase-2 (194 aa).

Arg50–Glu54 is a GTP binding site. Zn(2+) is bound by residues Cys55, Cys66, and Cys68. GTP contacts are provided by residues Glu94–Arg96 and Thr116. Asp128 (proton acceptor) is an active-site residue. Residue Arg130 is the Nucleophile of the active site. Positions 151 and 156 each coordinate GTP.

Belongs to the GTP cyclohydrolase II family. Zn(2+) serves as cofactor.

The enzyme catalyses GTP + 4 H2O = 2,5-diamino-6-hydroxy-4-(5-phosphoribosylamino)-pyrimidine + formate + 2 phosphate + 3 H(+). It functions in the pathway cofactor biosynthesis; riboflavin biosynthesis; 5-amino-6-(D-ribitylamino)uracil from GTP: step 1/4. In terms of biological role, catalyzes the conversion of GTP to 2,5-diamino-6-ribosylamino-4(3H)-pyrimidinone 5'-phosphate (DARP), formate and pyrophosphate. This is GTP cyclohydrolase-2 from Helicobacter hepaticus (strain ATCC 51449 / 3B1).